Reading from the N-terminus, the 159-residue chain is Immunoglobulin J chain (159 aa).

The N-terminal stretch at 1–22 (MKNHLLFWGVLAVFIKAVHVKA) is a signal peptide. A Pyrrolidone carboxylic acid modification is found at Gln-23. 3 cysteine pairs are disulfide-bonded: Cys-35–Cys-123, Cys-94–Cys-114, and Cys-131–Cys-156. The N-linked (GlcNAc...) (complex) asparagine glycan is linked to Asn-71.

In terms of assembly, part of the secretory IgA (sIgA) complex that consists of two, four or five IgA monomers, and two additional non-Ig polypeptides, namely the JCHAIN and the secretory component (the proteolytic product of PIGR). Part of the secretory IgM (sIgM) complex that consists of five IgM monomers, and two additional non-Ig polypeptides, namely the JCHAIN and the secretory component (the proteolytic product of PIGR). JCHAIN-containing IgM interacts (via CH4 domain) with FCRM (via Ig-like domain).

It localises to the secreted. In terms of biological role, serves to link two monomer units of either IgM or IgA. In the case of IgM, the J chain-joined dimer is a nucleating unit for the IgM pentamer, and in the case of IgA it induces dimers and/or larger polymers. It also helps to bind these immunoglobulins to secretory component. The polypeptide is Immunoglobulin J chain (Homo sapiens (Human)).